Here is a 404-residue protein sequence, read N- to C-terminus: Glucoside xylosyltransferase 1 (404 aa).

Over 1–6 the chain is Cytoplasmic; sequence MRRYLR. The chain crosses the membrane as a helical; Signal-anchor for type II membrane protein span at residues 7–29; the sequence is VVGLCLACGFCSLLYAFSQLAVS. At 30–404 the chain is on the lumenal side; sequence LEEGAAGGRR…NRYDTPPKER (375 aa). Residue asparagine 201 is glycosylated (N-linked (GlcNAc...) asparagine).

Belongs to the glycosyltransferase 8 family.

It is found in the membrane. The enzyme catalyses 3-O-(beta-D-glucosyl)-L-seryl-[EGF-like domain protein] + UDP-alpha-D-xylose = 3-O-[alpha-D-xylosyl-(1-&gt;3)-beta-D-glucosyl]-L-seryl-[EGF-like domain protein] + UDP + H(+). In terms of biological role, glycosyltransferase which elongates the O-linked glucose attached to EGF-like repeats in the extracellular domain of Notch proteins by catalyzing the addition of xylose. The sequence is that of Glucoside xylosyltransferase 1 (Gxylt1) from Mus musculus (Mouse).